Here is a 131-residue protein sequence, read N- to C-terminus: Small ribosomal subunit protein uS8 (131 aa).

This sequence belongs to the universal ribosomal protein uS8 family. Part of the 30S ribosomal subunit. Contacts proteins S5 and S12.

One of the primary rRNA binding proteins, it binds directly to 16S rRNA central domain where it helps coordinate assembly of the platform of the 30S subunit. The protein is Small ribosomal subunit protein uS8 of Bacteroides thetaiotaomicron (strain ATCC 29148 / DSM 2079 / JCM 5827 / CCUG 10774 / NCTC 10582 / VPI-5482 / E50).